Reading from the N-terminus, the 66-residue chain is ATP synthase protein 8 (66 aa).

A helical transmembrane segment spans residues 8–24 (TWLMMIMSMFLALFIIF). Lys-54 is subject to N6-acetyllysine; alternate. An N6-succinyllysine; alternate modification is found at Lys-54. Lys-57 carries the N6-acetyllysine modification.

This sequence belongs to the ATPase protein 8 family. F-type ATPases have 2 components, CF(1) - the catalytic core - and CF(0) - the membrane proton channel. Component of an ATP synthase complex composed of ATP5PB, ATP5MC1, ATP5F1E, ATP5PD, ATP5ME, ATP5PF, ATP5MF, MT-ATP6, MT-ATP8, ATP5F1A, ATP5F1B, ATP5F1D, ATP5F1C, ATP5PO, ATP5MG, ATP5MK and ATP5MJ. Interacts with PRICKLE3.

It is found in the mitochondrion membrane. Mitochondrial membrane ATP synthase (F(1)F(0) ATP synthase or Complex V) produces ATP from ADP in the presence of a proton gradient across the membrane which is generated by electron transport complexes of the respiratory chain. F-type ATPases consist of two structural domains, F(1) - containing the extramembraneous catalytic core and F(0) - containing the membrane proton channel, linked together by a central stalk and a peripheral stalk. During catalysis, ATP synthesis in the catalytic domain of F(1) is coupled via a rotary mechanism of the central stalk subunits to proton translocation. Part of the complex F(0) domain. Minor subunit located with subunit a in the membrane. This Cervus elaphus hippelaphus (European red deer) protein is ATP synthase protein 8 (MT-ATP8).